Here is a 604-residue protein sequence, read N- to C-terminus: Replication protein E1 (604 aa).

Positions 76 to 78 (KRK) match the Nuclear localization signal motif. 2 positions are modified to phosphoserine; by host: S81 and S89. Positions 88–97 (LSPRLQSISL) match the Nuclear export signal motif. Residues 144-307 (GSGDVDIHYL…TILGHNNAEA (164 aa)) form a DNA-binding region region. Residues 406 to 556 (VNFIMFLAAF…FPMKSDDTPQ (151 aa)) enclose the SF3 helicase domain. Residue 432-439 (GPPNSGKS) coordinates ATP. K513 participates in a covalent cross-link: Glycyl lysine isopeptide (Lys-Gly) (interchain with G-Cter in SUMO). Positions 578–604 (SDQEDEGENGESQRAFQCSAGSANEHL) are disordered. Residues 587-604 (GESQRAFQCSAGSANEHL) show a composition bias toward polar residues.

The protein belongs to the papillomaviridae E1 protein family. In terms of assembly, can form hexamers. Interacts with E2 protein; this interaction increases E1 DNA binding specificity. Interacts with host DNA polymerase subunit POLA2. Interacts with host single stranded DNA-binding protein RPA1. Interacts with host TOP1; this interaction stimulates the enzymatic activity of TOP1. Post-translationally, phosphorylated. In terms of processing, sumoylated.

The protein resides in the host nucleus. The catalysed reaction is Couples ATP hydrolysis with the unwinding of duplex DNA by translocating in the 3'-5' direction.. It catalyses the reaction ATP + H2O = ADP + phosphate + H(+). Functionally, ATP-dependent DNA 3'-5' helicase required for initiation of viral DNA replication. It forms a complex with the viral E2 protein. The E1-E2 complex binds to the replication origin which contains binding sites for both proteins. During the initial step, a dimer of E1 interacts with a dimer of protein E2 leading to a complex that binds the viral origin of replication with high specificity. Then, a second dimer of E1 displaces the E2 dimer in an ATP-dependent manner to form the E1 tetramer. Following this, two E1 monomers are added to each half of the site, which results in the formation of two E1 trimers on the viral ori. Subsequently, two hexamers will be created. The double hexamer acts as a bi-directional helicase machinery and unwinds the viral DNA and then recruits the host DNA polymerase to start replication. In Homo sapiens (Human), this protein is Replication protein E1.